The primary structure comprises 851 residues: Envelope glycoprotein gp160 (851 aa).

An N-terminal signal peptide occupies residues 1 to 24 (MEPGRNQLLVAILLTSACLIYCKQ). Residues 25-669 (YVTVFYGIPA…LTSWIKYIQY (645 aa)) lie on the Extracellular side of the membrane. N37 carries N-linked (GlcNAc...) asparagine; by host glycosylation. C44 and C57 are oxidised to a cystine. N70, N114, N127, N134, N142, N157, N184, N195, N227, N230, N261, N267, N278, N289, N299, N355, N361, N388, N398, N401, N438, N453, and N456 each carry an N-linked (GlcNAc...) asparagine; by host glycan. Intrachain disulfides connect C101-C203, C108-C194, C113-C154, C216-C246, and C226-C238. The segment at 113-153 (CNITSGTTATPSPPNITIIDENSTCIGDNNCTGLGKEEVVE) is V1. The V2 stretch occupies residues 154–194 (CEFNMTGLEQDKKRKYNDAWYSRDVVCDKTNGTGTCYMRHC). The tract at residues 294 to 327 (CKRPGNKTVVPITLMSGRRFHSRPVYNKKPGQAW) is V3. A disulfide bond links C294 and C328. 2 disulfide bridges follow: C380–C437 and C387–C410. The segment at 387 to 410 (CNMTWFLNWVENKTNQTHGNYAPC) is V4. Positions 453-459 (NQTNITF) are V5. Positions 502 to 522 (GVFVLGFLGFLATAGSAMGGA) are fusion peptide. Residues 565-581 (LQARVTAIEKYLKDQAQ) are immunosuppression. N-linked (GlcNAc...) asparagine; by host glycosylation is found at N601, N610, and N626. The MPER; binding to GalCer stretch occupies residues 647–668 (KLNSWDVFGNWFDLTSWIKYIQ). Residues 670-690 (GVYIVVGIIGLRIAIYIVQLL) traverse the membrane as a helical segment. The Cytoplasmic segment spans residues 691-851 (SRLRKGYRPV…IRQGAEIALL (161 aa)). The YXXV motif; contains endocytosis signal signature appears at 697–700 (YRPV). C763 carries the S-palmitoyl cysteine; by host lipid modification. The Di-leucine internalization motif motif lies at 850–851 (LL).

The mature envelope protein (Env) consists of a homotrimer of non-covalently associated gp120-gp41 heterodimers. The resulting complex protrudes from the virus surface as a spike. There seems to be as few as 10 spikes on the average virion. Interacts with human CD4, CCR5 and CXCR4, to form a P4HB/PDI-CD4-CXCR4-gp120 complex. Gp120 also interacts with the C-type lectins CD209/DC-SIGN and CLEC4M/DC-SIGNR (collectively referred to as DC-SIGN(R)). Gp120 and gp41 interact with GalCer. As to quaternary structure, the mature envelope protein (Env) consists of a homotrimer of non-covalently associated gp120-gp41 heterodimers. The resulting complex protrudes from the virus surface as a spike. There seems to be as few as 10 spikes on the average virion. In terms of processing, specific enzymatic cleavages in vivo yield mature proteins. Envelope glycoproteins are synthesized as an inactive precursor that is heavily N-glycosylated and processed likely by host cell furin in the Golgi to yield the mature SU and TM proteins. The cleavage site between SU and TM requires the minimal sequence [KR]-X-[KR]-R. Post-translationally, palmitoylation of the transmembrane protein and of Env polyprotein (prior to its proteolytic cleavage) is essential for their association with host cell membrane lipid rafts. Palmitoylation is therefore required for envelope trafficking to classical lipid rafts, but not for viral replication.

It is found in the virion membrane. Its subcellular location is the host cell membrane. The protein localises to the host endosome membrane. In terms of biological role, the surface protein gp120 (SU) attaches the virus to the host lymphoid cell by binding to the primary receptor CD4. This interaction induces a structural rearrangement creating a high affinity binding site for a chemokine coreceptor like CXCR4 and/or CCR5. This peculiar 2 stage receptor-interaction strategy allows gp120 to maintain the highly conserved coreceptor-binding site in a cryptic conformation, protected from neutralizing antibodies. Since CD4 also displays a binding site for the disulfide-isomerase P4HB/PDI, a P4HB/PDI-CD4-CXCR4-gp120 complex may form. In that complex, P4HB/PDI could reach and reduce gp120 disulfide bonds, causing major conformational changes in gp120. TXN, another PDI family member could also be involved in disulfide rearrangements in Env during fusion. These changes are transmitted to the transmembrane protein gp41 and are thought to activate its fusogenic potential by unmasking its fusion peptide. Its function is as follows. The surface protein gp120 is a ligand for CD209/DC-SIGN and CLEC4M/DC-SIGNR, which are respectively found on dendritic cells (DCs), and on endothelial cells of liver sinusoids and lymph node sinuses. These interactions allow capture of viral particles at mucosal surfaces by these cells and subsequent transmission to permissive cells. DCs are professional antigen presenting cells, critical for host immunity by inducing specific immune responses against a broad variety of pathogens. They act as sentinels in various tissues where they take up antigen, process it, and present it to T-cells following migration to lymphoid organs. HIV subverts the migration properties of dendritic cells to gain access to CD4+ T-cells in lymph nodes. Virus transmission to permissive T-cells occurs either in trans (without DCs infection, through viral capture and transmission), or in cis (following DCs productive infection, through the usual CD4-gp120 interaction), thereby inducing a robust infection. In trans infection, bound virions remain infectious over days and it is proposed that they are not degraded, but protected in non-lysosomal acidic organelles within the DCs close to the cell membrane thus contributing to the viral infectious potential during DCs' migration from the periphery to the lymphoid tissues. On arrival at lymphoid tissues, intact virions recycle back to DCs' cell surface allowing virus transmission to CD4+ T-cells. Virion capture also seems to lead to MHC-II-restricted viral antigen presentation, and probably to the activation of HIV-specific CD4+ cells. Functionally, the transmembrane protein gp41 (TM) acts as a class I viral fusion protein. Under the current model, the protein has at least 3 conformational states: pre-fusion native state, pre-hairpin intermediate state, and post-fusion hairpin state. During fusion of viral and target intracellular membranes, the coiled coil regions (heptad repeats) assume a trimer-of-hairpins structure, positioning the fusion peptide in close proximity to the C-terminal region of the ectodomain. The formation of this structure appears to drive apposition and subsequent fusion of viral and target cell membranes. Complete fusion occurs in host cell endosomes and is dynamin-dependent, however some lipid transfer might occur at the plasma membrane. The virus undergoes clathrin-dependent internalization long before endosomal fusion, thus minimizing the surface exposure of conserved viral epitopes during fusion and reducing the efficacy of inhibitors targeting these epitopes. Membranes fusion leads to delivery of the nucleocapsid into the cytoplasm. The envelope glycoprotein gp160 precursor down-modulates cell surface CD4 antigen by interacting with it in the endoplasmic reticulum and blocking its transport to the cell surface. In terms of biological role, the gp120-gp41 heterodimer seems to contribute to T-cell depletion during HIV-1 infection. The envelope glycoproteins expressed on the surface of infected cells induce apoptosis through an interaction with uninfected cells expressing the receptor (CD4) and the coreceptors CXCR4 or CCR5. This type of bystander killing may be obtained by at least three distinct mechanisms. First, the interaction between the 2 cells can induce cellular fusion followed by nuclear fusion within the syncytium. Syncytia are condemned to die from apoptosis. Second, the 2 interacting cells may not fuse entirely and simply exchange plasma membrane lipids, after a sort of hemifusion process, followed by rapid death. Third, it is possible that virus-infected cells, on the point of undergoing apoptosis, fuse with CD4-expressing cells, in which case apoptosis is rapidly transmitted from one cell to the other and thus occurs in a sort of contagious fashion. Its function is as follows. The gp120-gp41 heterodimer allows rapid transcytosis of the virus through CD4 negative cells such as simple epithelial monolayers of the intestinal, rectal and endocervical epithelial barriers. Both gp120 and gp41 specifically recognize glycosphingolipids galactosyl-ceramide (GalCer) or 3' sulfo-galactosyl-ceramide (GalS) present in the lipid rafts structures of epithelial cells. Binding to these alternative receptors allows the rapid transcytosis of the virus through the epithelial cells. This transcytotic vesicle-mediated transport of virions from the apical side to the basolateral side of the epithelial cells does not involve infection of the cells themselves. The polypeptide is Envelope glycoprotein gp160 (env) (Human immunodeficiency virus type 2 subtype A (isolate D194) (HIV-2)).